The sequence spans 52 residues: Large ribosomal subunit protein bL33 (52 aa).

This sequence belongs to the bacterial ribosomal protein bL33 family.

This is Large ribosomal subunit protein bL33 from Chlamydia trachomatis serovar A (strain ATCC VR-571B / DSM 19440 / HAR-13).